The following is a 240-amino-acid chain: uncharacterized protein (240 aa).

The interval 26-52 (DYVDDGESLPTRQSVKNQREQKKKQGK) is disordered. The chain crosses the membrane as a helical span at residues 57–77 (LFTVLAVIFVFVPVIVLVTLF). A disordered region spans residues 100–185 (KYEVVPKSED…QPAEPVQNVP (86 aa)). Residues 103-159 (VVPKSEDKNDTADTKETALQKESKKEPEDSKPKEQTAADKKQTAVAEKEDSPNKEEA) are compositionally biased toward basic and acidic residues. The segment covering 160–185 (TAAAASSSQSTVQQQEQPAEPVQNVP) has biased composition (low complexity). Positions 189 to 235 (VKHTVQKKETLYRISMKYYKSRTGEEKIRAYNHLNGNDVYTGQVLDI) constitute a LysM domain.

The protein localises to the membrane. This is an uncharacterized protein from Bacillus subtilis (strain 168).